Reading from the N-terminus, the 453-residue chain is DDB1- and CUL4-associated factor 12 (453 aa).

Basic residues predominate over residues 1 to 12; it reads MARKAVSRKRKA. Residues 1-34 form a disordered region; sequence MARKAVSRKRKASASPGAGSDAQGPQFGWDHSLH. Positions 1 to 38 are required for nuclear location and interaction with MOV10; it reads MARKAVSRKRKASASPGAGSDAQGPQFGWDHSLHKRKR. Serine 15 is modified (phosphoserine). WD repeat units lie at residues 138 to 178, 182 to 220, 250 to 289, and 338 to 375; these read QQGC…PVCV, GHKD…LTKS, PDNC…SKLL, and ERGS…FLEE.

The protein belongs to the WD repeat DCAF12 family. Component of the DCX(DCAF12) E3 ubiquitin ligase complex, at least composed of CUL4 (CUL4A or CUL4B), DDB1, DCAF12 and RBX1.

The protein localises to the cytoplasm. It is found in the cytoskeleton. Its subcellular location is the microtubule organizing center. It localises to the centrosome. The protein resides in the nucleus. Its pathway is protein modification; protein ubiquitination. Functionally, substrate-recognition component of a DCX (DDB1-CUL4-X-box) E3 ubiquitin-protein ligase complex of the DesCEND (destruction via C-end degrons) pathway, which recognizes a C-degron located at the extreme C terminus of target proteins, leading to their ubiquitination and degradation. The C-degron recognized by the DesCEND pathway is usually a motif of less than ten residues and can be present in full-length proteins, truncated proteins or proteolytically cleaved forms. The DCX(DCAF12) complex specifically recognizes proteins with a diglutamate (Glu-Glu) at the C-terminus, such as MAGEA3, MAGEA6 and CCT5, leading to their ubiquitination and degradation. Ubiquitination of MAGEA3, MAGEA6 by DCX(DCAF12) complex is required for starvation-induced autophagy. Also directly recognizes the C-terminal glutamate-leucine (Glu-Leu) degron as an alternative degron in proteins such as MOV10, leading to their ubiquitination and degradation. Controls the protein level of MOV10 during spermatogenesis and in T cells, especially after their activation. The sequence is that of DDB1- and CUL4-associated factor 12 from Mus musculus (Mouse).